The chain runs to 806 residues: GPI ethanolamine phosphate transferase 2 (806 aa).

Residues N70, N184, and N242 are each glycosylated (N-linked (GlcNAc...) asparagine). The next 3 helical transmembrane spans lie at 396 to 416, 425 to 445, and 451 to 471; these read MLFLGVGMLSIVTAATAYCYI, SVLMIAVTALLGSSVFGSSFV, and IWWWIIIAVVGYSWATRPSCT. N-linked (GlcNAc...) asparagine glycosylation occurs at N488. The next 8 helical transmembrane spans lie at 508–528, 532–552, 593–613, 624–644, 664–684, 706–726, 745–765, and 782–804; these read PSIKWLLVCATLAVVALDGFT, LLSIFNLLAGLLCFVYKTCWA, LFFKVTAAIVCMRIAYNVVFA, LFTIVLIMQTASQNIPLFLVF, CEMFFVLSLILQNLSFFQFGG, IYVVGLLMCIGNMAPAIYWSL, LSSMFFYSVNSLLLLVACICM, and LLGWNILIHFLTETVLEPFLLMV.

Belongs to the PIGG/PIGN/PIGO family. PIGG subfamily.

It localises to the endoplasmic reticulum membrane. Its pathway is glycolipid biosynthesis; glycosylphosphatidylinositol-anchor biosynthesis. Functionally, ethanolamine phosphate transferase involved in glycosylphosphatidylinositol-anchor biosynthesis. Transfers ethanolamine phosphate to the GPI second mannose. In Eremothecium gossypii (strain ATCC 10895 / CBS 109.51 / FGSC 9923 / NRRL Y-1056) (Yeast), this protein is GPI ethanolamine phosphate transferase 2 (LAS21).